The chain runs to 120 residues: uncharacterized protein (120 aa).

Residues Asn-29 and Asn-68 are each glycosylated (N-linked (GlcNAc...) asparagine; by host). A helical membrane pass occupies residues 74 to 94 (IFNGLGFILIVIFIYLLIITL).

It belongs to the asfivirus B117L family.

The protein localises to the host membrane. Its subcellular location is the virion. This is an uncharacterized protein from Ornithodoros (relapsing fever ticks).